A 425-amino-acid polypeptide reads, in one-letter code: Serine--tRNA ligase (425 aa).

Thr-230–Glu-232 is a binding site for L-serine. Arg-261 to Glu-263 is a binding site for ATP. L-serine is bound at residue Glu-284. Position 348-351 (Glu-348–Ser-351) interacts with ATP. An L-serine-binding site is contributed by Ser-384.

The protein belongs to the class-II aminoacyl-tRNA synthetase family. Type-1 seryl-tRNA synthetase subfamily. In terms of assembly, homodimer. The tRNA molecule binds across the dimer.

It is found in the cytoplasm. It catalyses the reaction tRNA(Ser) + L-serine + ATP = L-seryl-tRNA(Ser) + AMP + diphosphate + H(+). The catalysed reaction is tRNA(Sec) + L-serine + ATP = L-seryl-tRNA(Sec) + AMP + diphosphate + H(+). It participates in aminoacyl-tRNA biosynthesis; selenocysteinyl-tRNA(Sec) biosynthesis; L-seryl-tRNA(Sec) from L-serine and tRNA(Sec): step 1/1. Functionally, catalyzes the attachment of serine to tRNA(Ser). Is also able to aminoacylate tRNA(Sec) with serine, to form the misacylated tRNA L-seryl-tRNA(Sec), which will be further converted into selenocysteinyl-tRNA(Sec). The sequence is that of Serine--tRNA ligase from Streptococcus equi subsp. equi (strain 4047).